The sequence spans 68 residues: Small ribosomal subunit protein bS21 (68 aa).

It belongs to the bacterial ribosomal protein bS21 family.

The chain is Small ribosomal subunit protein bS21 from Endomicrobium trichonymphae.